We begin with the raw amino-acid sequence, 472 residues long: Glutamate synthase [NADPH] small chain (472 aa).

In terms of domain architecture, 4Fe-4S ferredoxin-type spans 41-72 (QDAAAQAHRCLHCGNPYCEWKCPVHNYIPNWL). [4Fe-4S] cluster contacts are provided by Cys-50, Cys-53, Cys-58, and Cys-62.

[4Fe-4S] cluster serves as cofactor.

It catalyses the reaction 2 L-glutamate + NADP(+) = L-glutamine + 2-oxoglutarate + NADPH + H(+). It participates in amino-acid biosynthesis; L-glutamate biosynthesis via GLT pathway; L-glutamate from 2-oxoglutarate and L-glutamine (NADP(+) route): step 1/1. It functions in the pathway energy metabolism; nitrogen metabolism. Its function is as follows. Catalyzes the conversion of L-glutamine and 2-oxoglutarate into two molecules of L-glutamate. In Halomonas elongata (strain ATCC 33173 / DSM 2581 / NBRC 15536 / NCIMB 2198 / 1H9), this protein is Glutamate synthase [NADPH] small chain.